Here is a 707-residue protein sequence, read N- to C-terminus: Elongation factor G (707 aa).

Residues 8 to 297 (ERVRNIGIAA…AVLDYLPSPL (290 aa)) enclose the tr-type G domain. Residues 17–24 (AHIDAGKT), 96–100 (DTPGH), and 150–153 (NKMD) contribute to the GTP site.

The protein belongs to the TRAFAC class translation factor GTPase superfamily. Classic translation factor GTPase family. EF-G/EF-2 subfamily.

It is found in the cytoplasm. In terms of biological role, catalyzes the GTP-dependent ribosomal translocation step during translation elongation. During this step, the ribosome changes from the pre-translocational (PRE) to the post-translocational (POST) state as the newly formed A-site-bound peptidyl-tRNA and P-site-bound deacylated tRNA move to the P and E sites, respectively. Catalyzes the coordinated movement of the two tRNA molecules, the mRNA and conformational changes in the ribosome. This Gloeobacter violaceus (strain ATCC 29082 / PCC 7421) protein is Elongation factor G.